Consider the following 88-residue polypeptide: MTILASISSIGNVKSISKSNNLSSLSNSSSSLQSMNSIQCGGCGNGGLLGAVGGLVGGVLTGTGVIVGSVLHGVGSILTGGSNNCGCN.

This sequence belongs to the hssA/B family.

This Dictyostelium discoideum (Social amoeba) protein is HssA/B-like protein 17 (hssl17).